Reading from the N-terminus, the 344-residue chain is Arginine N-succinyltransferase (344 aa).

L125 contacts succinyl-CoA. Residue H229 is the Proton donor of the active site.

The protein belongs to the arginine N-succinyltransferase family.

The catalysed reaction is succinyl-CoA + L-arginine = N(2)-succinyl-L-arginine + CoA + H(+). It participates in amino-acid degradation; L-arginine degradation via AST pathway; L-glutamate and succinate from L-arginine: step 1/5. In terms of biological role, catalyzes the transfer of succinyl-CoA to arginine to produce N(2)-succinylarginine. The chain is Arginine N-succinyltransferase from Escherichia coli O6:K15:H31 (strain 536 / UPEC).